A 227-amino-acid polypeptide reads, in one-letter code: PKHD-type hydroxylase Veis_3084 (227 aa).

The interval 27-51 is disordered; sequence DDGKDSAGTQARQAKNNQQLPRDSE. The segment covering 33-47 has biased composition (polar residues); the sequence is AGTQARQAKNNQQLP. A Fe2OG dioxygenase domain is found at 78-179; it reads RVFPPRVNRY…RMACFFWVES (102 aa). The Fe cation site is built by H97, D99, and H160. Residue R170 coordinates 2-oxoglutarate.

It depends on Fe(2+) as a cofactor. L-ascorbate is required as a cofactor.

The polypeptide is PKHD-type hydroxylase Veis_3084 (Verminephrobacter eiseniae (strain EF01-2)).